The primary structure comprises 380 residues: Endo-polygalacturonase (380 aa).

Positions 1 to 17 (MVHILSSALSLLRLGAA) are cleaved as a signal peptide. A propeptide spanning residues 18-42 (VSAAPAPAPTAAPNVADALAAVEKR) is cleaved from the precursor. A disulfide bridge links cysteine 46 with cysteine 64. 6 PbH1 repeats span residues 178–207 (ASGL…DVGS), 208–229 (STDI…AINS), 230–250 (GTGI…SIGS), 259–280 (VSDV…RIKT), 288–310 (VSGV…VIEQ), and 322–343 (TSGV…SSSA). The Proton donor role is filled by aspartate 222. Residues cysteine 224 and cysteine 240 are joined by a disulfide bond. Residue histidine 244 is part of the active site. Cysteine 350 and cysteine 353 are joined by a disulfide. The N-linked (GlcNAc...) asparagine glycan is linked to asparagine 361. An intrachain disulfide couples cysteine 371 to cysteine 380.

It belongs to the glycosyl hydrolase 28 family.

It is found in the secreted. The enzyme catalyses (1,4-alpha-D-galacturonosyl)n+m + H2O = (1,4-alpha-D-galacturonosyl)n + (1,4-alpha-D-galacturonosyl)m.. In Sclerotinia sclerotiorum (White mold), this protein is Endo-polygalacturonase (PG1).